The chain runs to 64 residues: Conotoxin mr5.1a (64 aa).

The N-terminal stretch at methionine 1–serine 19 is a signal peptide. A propeptide spanning residues valine 20–asparagine 48 is cleaved from the precursor. Position 60 is a 4-carboxyglutamate (glutamate 60).

This sequence belongs to the conotoxin T superfamily. In terms of processing, contains 2 disulfide bonds that can be either 'C1-C3, C2-C4' or 'C1-C4, C2-C3', since these disulfide connectivities have been observed for conotoxins with cysteine framework V (for examples, see AC P0DQQ7 and AC P81755). In terms of tissue distribution, expressed by the venom duct.

It localises to the secreted. This chain is Conotoxin mr5.1a, found in Conus marmoreus (Marble cone).